The following is a 197-amino-acid chain: Probable calcium-binding protein CML21 (197 aa).

The disordered stretch occupies residues 1–33 (MLRPPPPSSVLTASAAAARPPASVVQPQRQAAH). Residues 9-30 (SVLTASAAAARPPASVVQPQRQ) show a composition bias toward low complexity. EF-hand domains are found at residues 37-72 (AETL…LGAR), 126-161 (EKEA…MGLP), and 164-197 (ACMA…AAGN). Ca(2+) contacts are provided by Asp50, Asp52, Asp54, Glu61, Asp139, Asp141, Asp143, Tyr145, Glu150, Asp177, Asp179, Asp181, Arg183, and Glu188.

In terms of biological role, potential calcium sensor. The polypeptide is Probable calcium-binding protein CML21 (CML21) (Oryza sativa subsp. japonica (Rice)).